The primary structure comprises 378 residues: Aminomethyltransferase (378 aa).

Belongs to the GcvT family. The glycine cleavage system is composed of four proteins: P, T, L and H.

The enzyme catalyses N(6)-[(R)-S(8)-aminomethyldihydrolipoyl]-L-lysyl-[protein] + (6S)-5,6,7,8-tetrahydrofolate = N(6)-[(R)-dihydrolipoyl]-L-lysyl-[protein] + (6R)-5,10-methylene-5,6,7,8-tetrahydrofolate + NH4(+). In terms of biological role, the glycine cleavage system catalyzes the degradation of glycine. This Acidobacterium capsulatum (strain ATCC 51196 / DSM 11244 / BCRC 80197 / JCM 7670 / NBRC 15755 / NCIMB 13165 / 161) protein is Aminomethyltransferase.